We begin with the raw amino-acid sequence, 68 residues long: Conotoxin Cal12.1p1 (68 aa).

The propeptide occupies 1-23; it reads DLITNSYTRGKPRHVTSWRNLRT.

Post-translationally, contains 4 disulfide bonds. As to expression, expressed by the venom duct.

Its subcellular location is the secreted. The sequence is that of Conotoxin Cal12.1p1 from Californiconus californicus (California cone).